A 421-amino-acid polypeptide reads, in one-letter code: Thymidine phosphorylase (421 aa).

This sequence belongs to the thymidine/pyrimidine-nucleoside phosphorylase family. In terms of assembly, homodimer.

The catalysed reaction is thymidine + phosphate = 2-deoxy-alpha-D-ribose 1-phosphate + thymine. The enzymes which catalyze the reversible phosphorolysis of pyrimidine nucleosides are involved in the degradation of these compounds and in their utilization as carbon and energy sources, or in the rescue of pyrimidine bases for nucleotide synthesis. The sequence is that of Thymidine phosphorylase (deoA) from Mycoplasma pneumoniae (strain ATCC 29342 / M129 / Subtype 1) (Mycoplasmoides pneumoniae).